A 300-amino-acid polypeptide reads, in one-letter code: Formyltetrahydrofolate deformylase (300 aa).

The ACT domain occupies R21–E102. D244 is a catalytic residue.

Belongs to the PurU family.

It carries out the reaction (6R)-10-formyltetrahydrofolate + H2O = (6S)-5,6,7,8-tetrahydrofolate + formate + H(+). Its pathway is purine metabolism; IMP biosynthesis via de novo pathway; formate from 10-formyl-5,6,7,8-tetrahydrofolate: step 1/1. Its function is as follows. Catalyzes the hydrolysis of 10-formyltetrahydrofolate (formyl-FH4) to formate and tetrahydrofolate (FH4). This is Formyltetrahydrofolate deformylase from Bacillus subtilis (strain 168).